Consider the following 78-residue polypeptide: Hainantoxin-XX.3 (78 aa).

The first 23 residues, 1 to 23 (MKSATLLALSFLLIASCFLICEA), serve as a signal peptide directing secretion. Positions 24-47 (EHSRYEEHEILEENMGDVVNLEQR) are excised as a propeptide. Disulfide bonds link cysteine 49–cysteine 62, cysteine 56–cysteine 66, and cysteine 61–cysteine 77.

This sequence belongs to the hainantoxin family. 20 subfamily. As to expression, expressed by the venom gland.

It is found in the secreted. Its function is as follows. Putative ion channel inhibitor. The polypeptide is Hainantoxin-XX.3 (Cyriopagopus hainanus (Chinese bird spider)).